The primary structure comprises 427 residues: MDKIVVQGGDNRLVGSVTIEGAKNAVLPLLAATILASEGKTVLQNVPILSDVFIMNQVVGGLNAKVDFDEEAHLVKVDATGDITEEAPYKYVSKMRASIVVLGPILARVGHAKVSMPGGCTIGSRPIDLHLKGLEAMGVKISQTAGYIEAKAERLHGAHIYMDFPSVGATQNLMMAATLADGVTVIENAAREPEIVDLAILLNEMGAKVKGAGTETITITGVEKLHGTTHNVVQDRIEAGTFMVAAAMTGGDVLIRDAVWEHNRPLIAKLLEMGVEVIEEDEGIRVRSQLENLKAVHVKTLPHPGFPTDMQAQFTALMTVAKGESTMVETVFENRFQHLEEMRRMGLHSEIIRDTARIVGGQPLQGAEVLSTDLRASAALILTGLVAQGETVVGKLVHLDRGYYGFHEKLAQLGAKIQRIEASDEDE.

23-24 serves as a coordination point for phosphoenolpyruvate; it reads KN. Arg-96 is a binding site for UDP-N-acetyl-alpha-D-glucosamine. Cys-120 functions as the Proton donor in the catalytic mechanism. Residue Cys-120 is modified to 2-(S-cysteinyl)pyruvic acid O-phosphothioketal. UDP-N-acetyl-alpha-D-glucosamine contacts are provided by residues 125 to 129, Asp-309, and Val-331; that span reads RPIDL.

The protein belongs to the EPSP synthase family. MurA subfamily.

The protein localises to the cytoplasm. The catalysed reaction is phosphoenolpyruvate + UDP-N-acetyl-alpha-D-glucosamine = UDP-N-acetyl-3-O-(1-carboxyvinyl)-alpha-D-glucosamine + phosphate. Its pathway is cell wall biogenesis; peptidoglycan biosynthesis. In terms of biological role, cell wall formation. Adds enolpyruvyl to UDP-N-acetylglucosamine. The chain is UDP-N-acetylglucosamine 1-carboxyvinyltransferase 1 from Streptococcus pneumoniae serotype 4 (strain ATCC BAA-334 / TIGR4).